Here is a 1856-residue protein sequence, read N- to C-terminus: Protein TANC1 (1856 aa).

Residue M1 is modified to N-acetylmethionine. 5 disordered regions span residues 1-45 (MLKA…LSTT), 58-130 (SMSL…SCSP), 203-222 (KSPC…KDSG), 262-296 (RADN…PVPY), and 437-489 (IASS…RPRE). A compositionally biased stretch (basic and acidic residues) spans 8 to 21 (KSREGGKGSKKEAG). A compositionally biased stretch (polar residues) spans 29 to 45 (PALSSSGDSPVNSLSTT). Phosphoserine occurs at positions 60, 63, 64, 204, 267, and 462. The segment covering 60-77 (SLPSSPLLPRQSLLTQSR) has biased composition (low complexity). The segment covering 203–216 (KSPCETISSPSSTL) has biased composition (polar residues). Residues 439–475 (SSSPSLSPKSSDPTQDLPGTPLLSPSSSTSALSVTRT) are compositionally biased toward low complexity. 11 ANK repeats span residues 893–925 (EGLS…NVNY), 931–960 (NNAP…CLDG), 964–993 (NGMN…RVDH), 997–1026 (KGQC…SAGP), 1037–1066 (ALQQ…EHEI), 1075–1104 (WGET…AVSR), 1108–1137 (RGVP…DVNL), 1141–1170 (QGRT…ALSS), 1174–1203 (EGLS…EIDQ), 1207–1236 (NGRT…VIEH), and 1240–1269 (SGMR…KLGN). TPR repeat units lie at residues 1286-1319 (LQKL…FPRE), 1333-1366 (VSLY…KPKS), and 1368-1400 (EAFY…CPNN). Residues 1417–1426 (LQRNQQQKQQ) show a composition bias toward low complexity. 3 disordered regions span residues 1417 to 1597 (LQRN…FGDR), 1636 to 1720 (DMAP…NTPF), and 1832 to 1856 (HVST…ESNV). Residues S1436 and S1463 each carry the phosphoserine modification. The span at 1454-1463 (EEAEEEDTSS) shows a compositional bias: acidic residues. Composition is skewed to polar residues over residues 1490 to 1505 (EGLQ…QSRA) and 1524 to 1556 (PTKQ…VSSQ). Over residues 1656–1686 (SLSSSGSSGSPSSSIKMSSSTSSLTSSSSVS) the composition is skewed to low complexity. S1665, S1673, and S1674 each carry phosphoserine.

The protein belongs to the TANC family. Interacts probably directly with DLG1, DLG4, HOMER1. Interacts with DLGAP1, INA, CAMK2A, GRIN2B and GRIA1. Interacts with TNIK and MINK1. Post-translationally, phosphorylated; by MINK1 and TNIK upon stimulation by RAP2A.

The protein resides in the postsynaptic density. May be a scaffold component in the postsynaptic density. The chain is Protein TANC1 (Tanc1) from Mus musculus (Mouse).